Consider the following 66-residue polypeptide: Large ribosomal subunit protein bL31 (66 aa).

Positions 16, 18, 36, and 39 each coordinate Zn(2+).

The protein belongs to the bacterial ribosomal protein bL31 family. Type A subfamily. Part of the 50S ribosomal subunit. Zn(2+) is required as a cofactor.

Binds the 23S rRNA. This is Large ribosomal subunit protein bL31 from Geobacillus kaustophilus (strain HTA426).